Reading from the N-terminus, the 371-residue chain is UDP-N-acetylglucosamine--N-acetylmuramyl-(pentapeptide) pyrophosphoryl-undecaprenol N-acetylglucosamine transferase (371 aa).

UDP-N-acetyl-alpha-D-glucosamine contacts are provided by residues 10–12 (TGG), asparagine 124, arginine 166, serine 196, and glutamine 301.

The protein belongs to the glycosyltransferase 28 family. MurG subfamily.

The protein localises to the cell membrane. It catalyses the reaction di-trans,octa-cis-undecaprenyl diphospho-N-acetyl-alpha-D-muramoyl-L-alanyl-D-glutamyl-meso-2,6-diaminopimeloyl-D-alanyl-D-alanine + UDP-N-acetyl-alpha-D-glucosamine = di-trans,octa-cis-undecaprenyl diphospho-[N-acetyl-alpha-D-glucosaminyl-(1-&gt;4)]-N-acetyl-alpha-D-muramoyl-L-alanyl-D-glutamyl-meso-2,6-diaminopimeloyl-D-alanyl-D-alanine + UDP + H(+). It functions in the pathway cell wall biogenesis; peptidoglycan biosynthesis. Functionally, cell wall formation. Catalyzes the transfer of a GlcNAc subunit on undecaprenyl-pyrophosphoryl-MurNAc-pentapeptide (lipid intermediate I) to form undecaprenyl-pyrophosphoryl-MurNAc-(pentapeptide)GlcNAc (lipid intermediate II). In Moorella thermoacetica (strain ATCC 39073 / JCM 9320), this protein is UDP-N-acetylglucosamine--N-acetylmuramyl-(pentapeptide) pyrophosphoryl-undecaprenol N-acetylglucosamine transferase.